We begin with the raw amino-acid sequence, 118 residues long: MKNKYIEQFEQKQIEGKNVPEFRAGDTLRLAIRIKEGDKTRIQNFEGICIARRGNGVDETFIVRKIGANNVGVERIFPIYSESLESITVLRRGRVRRARLFYLRDRRGKAARIKELKK.

Belongs to the bacterial ribosomal protein bL19 family.

Its function is as follows. This protein is located at the 30S-50S ribosomal subunit interface and may play a role in the structure and function of the aminoacyl-tRNA binding site. The sequence is that of Large ribosomal subunit protein bL19 from Campylobacter lari (strain RM2100 / D67 / ATCC BAA-1060).